The primary structure comprises 469 residues: Sorting and assembly machinery component 50 homolog (469 aa).

The POTRA domain occupies 45–125 (VVVQHVHFDG…LDVTFEVTEL (81 aa)). The residue at position 255 (Lys255) is an N6-methyllysine.

The protein belongs to the SAM50/omp85 family. Associates with the mitochondrial contact site and cristae organizing system (MICOS) complex, composed of at least MICOS10/MIC10, CHCHD3/MIC19, CHCHD6/MIC25, APOOL/MIC27, IMMT/MIC60, APOO/MIC23/MIC26 and QIL1/MIC13. This complex was also known under the names MINOS or MitOS complex. The MICOS complex associates with mitochondrial outer membrane proteins SAMM50, MTX1 and MTX2 (together described as components of the mitochondrial outer membrane sorting assembly machinery (SAM) complex) and DNAJC11, mitochondrial inner membrane protein TMEM11 and with HSPA9. The MICOS and SAM complexes together with DNAJC11 are part of a large protein complex spanning both membranes termed the mitochondrial intermembrane space bridging (MIB) complex. Interacts with IMMT/MIC60. Interacts with CHCHD3/MIC19. Interacts with ARMC1. As to quaternary structure, (Microbial infection) Interacts with parasite T.gondii RH strain MAF1b1; the interaction is probably indirect and results in the disruption of the MIB complex and the formation of SPOTs (structures positive for outer mitochondrial membrane (OMM)), a cellular response to OMM stress, which leads to the constitutive shedding of OMM vesicles.

It is found in the mitochondrion outer membrane. It localises to the cytoplasm. The protein resides in the mitochondrion. Plays a crucial role in the maintenance of the structure of mitochondrial cristae and the proper assembly of the mitochondrial respiratory chain complexes. Required for the assembly of TOMM40 into the TOM complex. This chain is Sorting and assembly machinery component 50 homolog (Samm50), found in Mus musculus (Mouse).